A 478-amino-acid chain; its full sequence is Bifunctional protein HldE (478 aa).

The ribokinase stretch occupies residues 1 to 318 (MKVTLPDFRQ…ENAIRGRADT (318 aa)). ATP is bound at residue 195–198 (NLSE). The active site involves aspartate 264. The tract at residues 344 to 478 (MTNGCFDILH…NMIKASTSQS (135 aa)) is cytidylyltransferase.

The protein in the N-terminal section; belongs to the carbohydrate kinase PfkB family. It in the C-terminal section; belongs to the cytidylyltransferase family. Homodimer.

The catalysed reaction is D-glycero-beta-D-manno-heptose 7-phosphate + ATP = D-glycero-beta-D-manno-heptose 1,7-bisphosphate + ADP + H(+). The enzyme catalyses D-glycero-beta-D-manno-heptose 1-phosphate + ATP + H(+) = ADP-D-glycero-beta-D-manno-heptose + diphosphate. The protein operates within nucleotide-sugar biosynthesis; ADP-L-glycero-beta-D-manno-heptose biosynthesis; ADP-L-glycero-beta-D-manno-heptose from D-glycero-beta-D-manno-heptose 7-phosphate: step 1/4. Its pathway is nucleotide-sugar biosynthesis; ADP-L-glycero-beta-D-manno-heptose biosynthesis; ADP-L-glycero-beta-D-manno-heptose from D-glycero-beta-D-manno-heptose 7-phosphate: step 3/4. Its function is as follows. Catalyzes the phosphorylation of D-glycero-D-manno-heptose 7-phosphate at the C-1 position to selectively form D-glycero-beta-D-manno-heptose-1,7-bisphosphate. Catalyzes the ADP transfer from ATP to D-glycero-beta-D-manno-heptose 1-phosphate, yielding ADP-D-glycero-beta-D-manno-heptose. In Pectobacterium atrosepticum (strain SCRI 1043 / ATCC BAA-672) (Erwinia carotovora subsp. atroseptica), this protein is Bifunctional protein HldE.